Consider the following 84-residue polypeptide: ATP synthase subunit c (84 aa).

Transmembrane regions (helical) follow at residues 9 to 29 (IFGSVILLAAAALGTAIGFSL) and 54 to 74 (IVAGLLDAISMIAVGIALLFI).

It belongs to the ATPase C chain family. F-type ATPases have 2 components, F(1) - the catalytic core - and F(0) - the membrane proton channel. F(1) has five subunits: alpha(3), beta(3), gamma(1), delta(1), epsilon(1). F(0) has three main subunits: a(1), b(2) and c(10-14). The alpha and beta chains form an alternating ring which encloses part of the gamma chain. F(1) is attached to F(0) by a central stalk formed by the gamma and epsilon chains, while a peripheral stalk is formed by the delta and b chains.

The protein resides in the cell inner membrane. Functionally, f(1)F(0) ATP synthase produces ATP from ADP in the presence of a proton or sodium gradient. F-type ATPases consist of two structural domains, F(1) containing the extramembraneous catalytic core and F(0) containing the membrane proton channel, linked together by a central stalk and a peripheral stalk. During catalysis, ATP synthesis in the catalytic domain of F(1) is coupled via a rotary mechanism of the central stalk subunits to proton translocation. Its function is as follows. Key component of the F(0) channel; it plays a direct role in translocation across the membrane. A homomeric c-ring of between 10-14 subunits forms the central stalk rotor element with the F(1) delta and epsilon subunits. The sequence is that of ATP synthase subunit c from Histophilus somni (strain 2336) (Haemophilus somnus).